The following is a 396-amino-acid chain: Tryptophan synthase beta chain (396 aa).

Residue lysine 86 is modified to N6-(pyridoxal phosphate)lysine.

Belongs to the TrpB family. As to quaternary structure, tetramer of two alpha and two beta chains. The cofactor is pyridoxal 5'-phosphate.

It carries out the reaction (1S,2R)-1-C-(indol-3-yl)glycerol 3-phosphate + L-serine = D-glyceraldehyde 3-phosphate + L-tryptophan + H2O. Its pathway is amino-acid biosynthesis; L-tryptophan biosynthesis; L-tryptophan from chorismate: step 5/5. In terms of biological role, the beta subunit is responsible for the synthesis of L-tryptophan from indole and L-serine. This chain is Tryptophan synthase beta chain, found in Pectobacterium carotovorum subsp. carotovorum (strain PC1).